The following is a 380-amino-acid chain: Asporin (380 aa).

An N-terminal signal peptide occupies residues Met-1–Ser-14. Residues Ala-15–Lys-32 constitute a propeptide that is removed on maturation. A compositionally biased stretch (acidic residues) spans Glu-35–Asn-54. The tract at residues Glu-35–Thr-59 is disordered. Ser-55 carries an O-linked (GalNAc...) serine glycan. One can recognise an LRRNT domain in the interval Phe-66 to Phe-102. Intrachain disulfides connect Cys-75–Cys-81 and Cys-79–Cys-88. LRR repeat units follow at residues Asp-103–Gly-124, Ser-127–Thr-148, Lys-151–Leu-173, Ala-174–Gly-193, Ala-196–Gly-219, Thr-242–Arg-263, Glu-266–Asn-287, Arg-290–Lys-312, Tyr-313–Pro-334, Thr-335–Trp-357, and Glu-358–Met-380. Positions Pro-166–Ile-212 are interaction with TGFB1. Asn-282 is a glycosylation site (N-linked (GlcNAc...) asparagine). Cys-333 and Cys-366 are oxidised to a cystine.

It belongs to the small leucine-rich proteoglycan (SLRP) family. SLRP class I subfamily. As to quaternary structure, interacts with TGFB1, TGFB2 and TGFB3. DCN, BGN, and FMOD inhibit binding to TGFB1. Interacts with BMP2. Interacts in vitro with type II collagen. Interacts with type I collagen. DCN can inhibit collagen binding. There is no serine/glycine dipeptide sequence expected for the attachment of O-linked glycosaminoglycans and this is probably not a proteoglycan. The O-linked polysaccharide on 54-Ser is probably the mucin type linked to GalNAc. Post-translationally, the N-linked glycan at Asn-282 is composed of variable structures of GlcNAc, mannose, fucose, HexNAc and hexose. As to expression, higher levels in osteoarthritic articular cartilage, aorta, uterus. Moderate expression in small intestine, heart, liver, bladder, ovary, stomach, and in the adrenal, thyroid, and mammary glands. Low expression in trachea, bone marrow, and lung. Colocalizes with TGFB1 in chondrocytes within osteoarthritic (OA) lesions of articular cartilage.

Its subcellular location is the secreted. The protein resides in the extracellular space. It localises to the extracellular matrix. Its function is as follows. Negatively regulates periodontal ligament (PDL) differentiation and mineralization to ensure that the PDL is not ossified and to maintain homeostasis of the tooth-supporting system. Inhibits BMP2-induced cytodifferentiation of PDL cells by preventing its binding to BMPR1B/BMP type-1B receptor, resulting in inhibition of BMP-dependent activation of SMAD proteins. Critical regulator of TGF-beta in articular cartilage and plays an essential role in cartilage homeostasis and osteoarthritis (OA) pathogenesis. Negatively regulates chondrogenesis in the articular cartilage by blocking the TGF-beta/receptor interaction on the cell surface and inhibiting the canonical TGF-beta/Smad signal. Binds calcium and plays a role in osteoblast-driven collagen biomineralization activity. The protein is Asporin (ASPN) of Homo sapiens (Human).